The primary structure comprises 98 residues: MIPGGLSEAKPATPEIQEIANEVKPQLEEKTNETYQKFEAIEYKTQVVAGINYYIKVQVDDNRYIHIKVFKGLPVQDSSLTLTGYQTGKSEDDELTGF.

M1 is subject to N-acetylmethionine. A Secondary area of contact motif is present at residues 46–50 (QVVAG).

It belongs to the cystatin family.

It localises to the cytoplasm. Its function is as follows. This is an intracellular thiol proteinase inhibitor. The polypeptide is Cystatin-A (CSTA) (Felis catus (Cat)).